Reading from the N-terminus, the 327-residue chain is ATP-dependent 6-phosphofructokinase (327 aa).

Residues Gly12, 73–74 (RL), and 103–106 (GDGS) each bind ATP. Asp104 is a binding site for Mg(2+). 126–128 (TID) is a binding site for substrate. Asp128 serves as the catalytic Proton acceptor. An ADP-binding site is contributed by Arg155. Residues Arg163 and 170 to 172 (MGH) contribute to the substrate site. ADP contacts are provided by residues 186 to 188 (GAD) and 214 to 216 (KRS). Substrate contacts are provided by residues Glu223, Arg245, and 251–254 (HTQR).

This sequence belongs to the phosphofructokinase type A (PFKA) family. ATP-dependent PFK group I subfamily. Prokaryotic clade 'B1' sub-subfamily. Homotetramer. Mg(2+) is required as a cofactor.

Its subcellular location is the cytoplasm. It catalyses the reaction beta-D-fructose 6-phosphate + ATP = beta-D-fructose 1,6-bisphosphate + ADP + H(+). It functions in the pathway carbohydrate degradation; glycolysis; D-glyceraldehyde 3-phosphate and glycerone phosphate from D-glucose: step 3/4. Allosterically activated by ADP and other diphosphonucleosides, and allosterically inhibited by phosphoenolpyruvate. Its function is as follows. Catalyzes the phosphorylation of D-fructose 6-phosphate to fructose 1,6-bisphosphate by ATP, the first committing step of glycolysis. The polypeptide is ATP-dependent 6-phosphofructokinase (Spiroplasma citri).